The primary structure comprises 310 residues: Low affinity immunoglobulin gamma Fc region receptor II-b (310 aa).

Positions 1–42 (MGILSFLPVLATESDWADCKSPQPWGHMLLWTAVLFLAPVAG) are cleaved as a signal peptide. The Extracellular portion of the chain corresponds to 43–217 (TPAAPPKAVL…KPVTITVQAP (175 aa)). 2 Ig-like C2-type domains span residues 48-127 (PKAV…VHLT) and 131-213 (EWLV…VTIT). Cystine bridges form between cysteine 71–cysteine 113 and cysteine 152–cysteine 196. N-linked (GlcNAc...) asparagine glycosylation is found at asparagine 106, asparagine 180, and asparagine 187. The chain crosses the membrane as a helical span at residues 218–240 (SSSPMGIIVAVVTGIAVAAIVAA). The Cytoplasmic portion of the chain corresponds to 241-310 (VVALIYCRKK…LEEPDDQNRI (70 aa)). An ITIM motif motif is present at residues 290-295 (ITYSLL). Tyrosine 292 carries the post-translational modification Phosphotyrosine; by SRC-type Tyr-kinases.

In terms of assembly, interacts with INPP5D/SHIP1. Interacts with FGR. Interacts with LYN. (Microbial infection) Isoform IIB1 interacts with measles virus protein N. Protein N is released in the blood following lysis of measles infected cells. This interaction presumably block inflammatory immune response. Post-translationally, phosphorylated by the SRC-type Tyr-kinases LYN and BLK. In terms of tissue distribution, is the most broadly distributed Fc-gamma-receptor. Expressed in monocyte, neutrophils, macrophages, basophils, eosinophils, Langerhans cells, B-cells, platelets cells and placenta (endothelial cells). Not detected in natural killer cells.

Its subcellular location is the cell membrane. Functionally, receptor for the Fc region of complexed or aggregated immunoglobulins gamma. Low affinity receptor. Involved in a variety of effector and regulatory functions such as phagocytosis of immune complexes and modulation of antibody production by B-cells. Binding to this receptor results in down-modulation of previous state of cell activation triggered via antigen receptors on B-cells (BCR), T-cells (TCR) or via another Fc receptor. Isoform IIB1 fails to mediate endocytosis or phagocytosis. Isoform IIB2 does not trigger phagocytosis. The protein is Low affinity immunoglobulin gamma Fc region receptor II-b (FCGR2B) of Homo sapiens (Human).